The chain runs to 382 residues: MKYELKTTSGNARRGRLTFSRPKGEYVVETPAFMPVGTYGTVKGMTPEEVAATGAQILLGNTFHLWLRPGQEVMKSHGDLHGFMQWHGPILTDSGGFQVFSLGKLRKIKEEGVTFQNPISGEKIFLSPEKSMEIQYDLGSDIVMIFDECTPYPATFDYAKNSMEMSLRWAKRSRDRFDELQNPRALFGIVQGGTYEELRKISAEGLVDIGFDGYAVGGLAVGEPKEEMHRILEFTTPLLPQDKPRYLMGVGKPEDLVEGVRRGIDMFDCVMPTRNARNGHLFVSNGIVKIRNAKYKTDTTPLDPECDCYTCKNYTKAYLYHLDKCGEILGARLNTIHNLRYYQRLMAQIRQAIEEDRFDDFVVEFYAKIGKEVPPLQSEVNK.

D93 acts as the Proton acceptor in catalysis. Residues 93-97 (DSGGF), D147, Q191, and G218 contribute to the substrate site. An RNA binding region spans residues 249 to 255 (GVGKPED). Catalysis depends on D268, which acts as the Nucleophile. The segment at 273-277 (TRNAR) is RNA binding; important for wobble base 34 recognition. C306, C308, C311, and H337 together coordinate Zn(2+).

It belongs to the queuine tRNA-ribosyltransferase family. In terms of assembly, homodimer. Within each dimer, one monomer is responsible for RNA recognition and catalysis, while the other monomer binds to the replacement base PreQ1. Zn(2+) is required as a cofactor.

It catalyses the reaction 7-aminomethyl-7-carbaguanine + guanosine(34) in tRNA = 7-aminomethyl-7-carbaguanosine(34) in tRNA + guanine. It functions in the pathway tRNA modification; tRNA-queuosine biosynthesis. Functionally, catalyzes the base-exchange of a guanine (G) residue with the queuine precursor 7-aminomethyl-7-deazaguanine (PreQ1) at position 34 (anticodon wobble position) in tRNAs with GU(N) anticodons (tRNA-Asp, -Asn, -His and -Tyr). Catalysis occurs through a double-displacement mechanism. The nucleophile active site attacks the C1' of nucleotide 34 to detach the guanine base from the RNA, forming a covalent enzyme-RNA intermediate. The proton acceptor active site deprotonates the incoming PreQ1, allowing a nucleophilic attack on the C1' of the ribose to form the product. After dissociation, two additional enzymatic reactions on the tRNA convert PreQ1 to queuine (Q), resulting in the hypermodified nucleoside queuosine (7-(((4,5-cis-dihydroxy-2-cyclopenten-1-yl)amino)methyl)-7-deazaguanosine). In Actinobacillus pleuropneumoniae serotype 3 (strain JL03), this protein is Queuine tRNA-ribosyltransferase.